A 1155-amino-acid chain; its full sequence is ATP-dependent helicase/deoxyribonuclease subunit B (1155 aa).

The 278-residue stretch at 1–278 (MSQLNAYIGR…FTKQERFENR (278 aa)) folds into the UvrD-like helicase ATP-binding domain. 9 to 16 (GRAGTGKS) provides a ligand contact to ATP. In terms of domain architecture, UvrD-like helicase C-terminal spans 270 to 584 (TKQERFENRD…SIGSMDLAKV (315 aa)). [4Fe-4S] cluster-binding residues include cysteine 785, cysteine 1112, cysteine 1115, and cysteine 1121.

It belongs to the helicase family. AddB/RexB type 1 subfamily. As to quaternary structure, heterodimer of AddA and AddB. It depends on Mg(2+) as a cofactor. [4Fe-4S] cluster is required as a cofactor.

In terms of biological role, the heterodimer acts as both an ATP-dependent DNA helicase and an ATP-dependent, dual-direction single-stranded exonuclease. Recognizes the chi site generating a DNA molecule suitable for the initiation of homologous recombination. The AddB subunit has 5' -&gt; 3' nuclease activity but not helicase activity. The protein is ATP-dependent helicase/deoxyribonuclease subunit B of Staphylococcus carnosus (strain TM300).